The following is a 403-amino-acid chain: GDSL esterase/lipase At1g28590 (403 aa).

Positions 1-27 (MASLDSLPAMKLVRFILSTLLVTSVNS) are cleaved as a signal peptide. Residue Ser-43 is the Nucleophile of the active site. Asn-139 and Asn-323 each carry an N-linked (GlcNAc...) asparagine glycan. Active-site residues include Asp-346 and His-349.

This sequence belongs to the 'GDSL' lipolytic enzyme family.

The protein localises to the secreted. The chain is GDSL esterase/lipase At1g28590 from Arabidopsis thaliana (Mouse-ear cress).